The primary structure comprises 293 residues: Putative F-box/kelch-repeat protein At4g34170 (293 aa).

Residues Val-9–Arg-55 enclose the F-box domain. 3 Kelch repeats span residues Asn-94–Gly-140, Lys-141–Arg-187, and Ser-226–Tyr-272.

This is Putative F-box/kelch-repeat protein At4g34170 from Arabidopsis thaliana (Mouse-ear cress).